Here is a 581-residue protein sequence, read N- to C-terminus: Arginine--tRNA ligase (581 aa).

Residues 126–136 (PNLAKEMHVGH) carry the 'HIGH' region motif.

It belongs to the class-I aminoacyl-tRNA synthetase family. In terms of assembly, monomer.

It localises to the cytoplasm. It catalyses the reaction tRNA(Arg) + L-arginine + ATP = L-arginyl-tRNA(Arg) + AMP + diphosphate. The polypeptide is Arginine--tRNA ligase (Shewanella halifaxensis (strain HAW-EB4)).